The following is a 217-amino-acid chain: UPF0319 protein HSM_0266 (217 aa).

The first 21 residues, 1–21, serve as a signal peptide directing secretion; sequence MKFSFAALASAMLLTSTAAFA.

The protein belongs to the UPF0319 family.

This chain is UPF0319 protein HSM_0266, found in Histophilus somni (strain 2336) (Haemophilus somnus).